The chain runs to 142 residues: Ovocleidin-17 (142 aa).

3 cysteine pairs are disulfide-bonded: C5–C16, C33–C138, and C113–C130. Residues 12–139 enclose the C-type lectin domain; it reads TPGGCLGFFS…CTERNAFVCK (128 aa). N59 carries N-linked (GlcNAc...) asparagine glycosylation. 2 positions are modified to phosphoserine: S61 and S67.

Expressed in the shell gland mucosa. Not detected in hen liver, magnum, isthmus, cartilage, bone or in egg white or yolk.

The protein localises to the secreted. The protein resides in the extracellular space. It is found in the extracellular matrix. In terms of biological role, may form proteinaceous networks during the construction of the eggshell which then may control the deposition of the mineral phase. This is Ovocleidin-17 from Gallus gallus (Chicken).